A 200-amino-acid chain; its full sequence is Large ribosomal subunit protein uL4 (200 aa).

A disordered region spans residues 43–67 (RAQKTRAEVSGSGKKPWRQKGTGRA).

It belongs to the universal ribosomal protein uL4 family. In terms of assembly, part of the 50S ribosomal subunit.

One of the primary rRNA binding proteins, this protein initially binds near the 5'-end of the 23S rRNA. It is important during the early stages of 50S assembly. It makes multiple contacts with different domains of the 23S rRNA in the assembled 50S subunit and ribosome. Its function is as follows. Forms part of the polypeptide exit tunnel. The polypeptide is Large ribosomal subunit protein uL4 (Haemophilus influenzae (strain PittEE)).